A 308-amino-acid chain; its full sequence is Elongation factor Ts (308 aa).

Residues 80–83 (TDFV) are involved in Mg(2+) ion dislocation from EF-Tu.

Belongs to the EF-Ts family.

Its subcellular location is the cytoplasm. Associates with the EF-Tu.GDP complex and induces the exchange of GDP to GTP. It remains bound to the aminoacyl-tRNA.EF-Tu.GTP complex up to the GTP hydrolysis stage on the ribosome. The chain is Elongation factor Ts from Rhizobium leguminosarum bv. trifolii (strain WSM2304).